The chain runs to 300 residues: Putative hydrolase ML2424 (300 aa).

Residue Asp-56 is the Nucleophile of the active site. Asp-56, Asp-58, and Asp-231 together coordinate Mg(2+). The active-site Proton donor is Asp-58.

This sequence belongs to the HAD-like hydrolase superfamily. SerB family. Requires Mg(2+) as cofactor.

In Mycobacterium leprae (strain TN), this protein is Putative hydrolase ML2424.